Here is a 123-residue protein sequence, read N- to C-terminus: Phosphoribosyl-AMP cyclohydrolase (123 aa).

Residue D81 coordinates Mg(2+). C82 serves as a coordination point for Zn(2+). D83 and D85 together coordinate Mg(2+). The Zn(2+) site is built by C98 and C105.

Belongs to the PRA-CH family. As to quaternary structure, homodimer. The cofactor is Mg(2+). Zn(2+) serves as cofactor.

It is found in the cytoplasm. The enzyme catalyses 1-(5-phospho-beta-D-ribosyl)-5'-AMP + H2O = 1-(5-phospho-beta-D-ribosyl)-5-[(5-phospho-beta-D-ribosylamino)methylideneamino]imidazole-4-carboxamide. The protein operates within amino-acid biosynthesis; L-histidine biosynthesis; L-histidine from 5-phospho-alpha-D-ribose 1-diphosphate: step 3/9. Functionally, catalyzes the hydrolysis of the adenine ring of phosphoribosyl-AMP. The polypeptide is Phosphoribosyl-AMP cyclohydrolase (Nocardioides sp. (strain ATCC BAA-499 / JS614)).